Here is a 155-residue protein sequence, read N- to C-terminus: 17.6 kDa class I heat shock protein 1 (155 aa).

The sHSP domain maps to 39–154 (SSSAIANARV…KAQVKSIDIS (116 aa)).

The protein belongs to the small heat shock protein (HSP20) family. Forms oligomeric structures. Binds to AKR2A.

The protein resides in the cytoplasm. Functionally, possesses chaperone activity. This Arabidopsis thaliana (Mouse-ear cress) protein is 17.6 kDa class I heat shock protein 1 (HSP17.6A).